Reading from the N-terminus, the 258-residue chain is Beta carbonic anhydrase 3 (258 aa).

The signal sequence occupies residues 1–28 (MSTESYEDAIKRLGELLSKKSDLGNVAA). Residues 24-54 (GNVAAAKIKKLTDELEELDSNKLDAVERIKS) adopt a coiled-coil conformation. Thr35 carries the phosphothreonine modification. Residue Ser95 is modified to Phosphoserine. Cys201 is subject to S-nitrosocysteine.

Belongs to the beta-class carbonic anhydrase family. Strongly expressed in aerial tissues including leaves, stems, flowers and siliques, and, to a lower extent, in roots.

It localises to the cytoplasm. Its subcellular location is the cytosol. It catalyses the reaction hydrogencarbonate + H(+) = CO2 + H2O. In terms of biological role, reversible hydration of carbon dioxide. This Arabidopsis thaliana (Mouse-ear cress) protein is Beta carbonic anhydrase 3 (BCA3).